Consider the following 135-residue polypeptide: uncharacterized protein (135 aa).

The tract at residues 100–125 (KESPATSSEDISSCSDCDSERLQSDD) is disordered. The span at 106–115 (SSEDISSCSD) shows a compositional bias: low complexity.

This is an uncharacterized protein from Microplitis demolitor (Parasitoid wasp).